Reading from the N-terminus, the 676-residue chain is Phosphatidylinositol-3,5-bisphosphate 3-phosphatase MTMR6 (676 aa).

In terms of domain architecture, Myotubularin phosphatase spans 125-501; it reads GWRRLDWNSE…ARFTVWTAMY (377 aa). Residues N249, N274, and I275 each coordinate a 1,2-diacyl-sn-glycero-3-phospho-(1D-myo-inositol-3,5-bisphosphate). The a 1,2-diacyl-sn-glycero-3-phospho-(1D-myo-inositol-3-phosphate) site is built by N249, N274, and I275. Residues 249–252, 274–275, and 335–341 each bind substrate; these read NKVQ, NI, and CSDGWDR. C335 functions as the Phosphocysteine intermediate in the catalytic mechanism. A 1,2-diacyl-sn-glycero-3-phospho-(1D-myo-inositol-3,5-bisphosphate) contacts are provided by S336, D337, G338, W339, D340, R341, K377, and R381. Positions 336, 337, 338, 339, 340, and 341 each coordinate a 1,2-diacyl-sn-glycero-3-phospho-(1D-myo-inositol-3-phosphate). An a 1,2-diacyl-sn-glycero-3-phospho-(1D-myo-inositol-3-phosphate)-binding site is contributed by R381. Position 381 (R381) interacts with substrate. The segment at 618-675 adopts an FYVE-type zinc-finger fold; it reads KWQPLRGADRCSNPACRGEFSSTIERRIHCHLCGMIFCRRCLKVSADERERVCDKCKT.

The protein belongs to the protein-tyrosine phosphatase family. Non-receptor class myotubularin subfamily. In terms of assembly, heterodimer with mtm-9. Expressed in intestinal cells. Expressed in head neurons, pre-anal ganglion, hypodermal cells, anal depressor muscle and non-neuronal cells in the tail.

The protein resides in the cytoplasm. Its subcellular location is the membrane. It localises to the apical cell membrane. It catalyses the reaction a 1,2-diacyl-sn-glycero-3-phospho-(1D-myo-inositol-3,5-bisphosphate) + H2O = a 1,2-diacyl-sn-glycero-3-phospho-(1D-myo-inositol-5-phosphate) + phosphate. The catalysed reaction is a 1,2-diacyl-sn-glycero-3-phospho-(1D-myo-inositol-3-phosphate) + H2O = a 1,2-diacyl-sn-glycero-3-phospho-(1D-myo-inositol) + phosphate. It carries out the reaction 1,2-dioctanoyl-sn-glycero-3-phospho-(1D-myo-inositol-3,5-bisphosphate) + H2O = 1,2-dioctanoyl-sn-glycero-3-phospho-(1D-myo-inositol-5-phosphate) + phosphate. The enzyme catalyses 1,2-dioctanoyl-sn-glycero-3-phospho-(1-D-myo-inositol-3-phosphate) + H2O = 1,2-dioctanoyl-sn-glycero-3-phospho-(1D-myo-inositol) + phosphate. Functionally, probable lipid phosphatase that specifically dephosphorylates the D-3 position of phosphatidylinositol 3-phosphate and phosphatidylinositol 3,5-bisphosphate, generating phosphatidylinositol and phosphatidylinositol 5-phosphate. In association with mtm-9, plays a role in endosome trafficking probably by regulating phosphatidylinositol-3-phosphate levels. Regulates fluid phase endocytosis in coelomocytes. Controls the endosomal localization of sorting nexin snx-3 and the levels of sorting receptor mig-14. By regulating the retrograde transport of mig-14, may be involved in the secretion of Wnt ligands such as egl-20. Regulates posterior migration of QL neuroblast descendants and the anterior migration of QR neuroblast descendants and HSN neurons during larval development. Involved in the formation of correct synapse number in DA9 motor neurons probably in part by regulating the secretion of Wnt ligand egl-20. The sequence is that of Phosphatidylinositol-3,5-bisphosphate 3-phosphatase MTMR6 from Caenorhabditis elegans.